We begin with the raw amino-acid sequence, 417 residues long: Adenosylhomocysteinase (417 aa).

Positions 53, 125, and 149 each coordinate substrate. 150–152 (TTT) contributes to the NAD(+) binding site. Substrate is bound by residues Lys-179 and Asp-183. NAD(+) contacts are provided by residues Asn-184, 213-218 (GYGWVG), Glu-236, Asn-271, 292-294 (AGH), and Asn-339.

This sequence belongs to the adenosylhomocysteinase family. Requires NAD(+) as cofactor.

The protein resides in the cytoplasm. It carries out the reaction S-adenosyl-L-homocysteine + H2O = L-homocysteine + adenosine. The protein operates within amino-acid biosynthesis; L-homocysteine biosynthesis; L-homocysteine from S-adenosyl-L-homocysteine: step 1/1. In terms of biological role, may play a key role in the regulation of the intracellular concentration of adenosylhomocysteine. The sequence is that of Adenosylhomocysteinase from Saccharolobus solfataricus (strain ATCC 35092 / DSM 1617 / JCM 11322 / P2) (Sulfolobus solfataricus).